A 361-amino-acid polypeptide reads, in one-letter code: D-malate dehydrogenase [decarboxylating] (361 aa).

The Mn(2+) site is built by D224, D248, and D252.

The protein belongs to the isocitrate and isopropylmalate dehydrogenases family. The cofactor is Mg(2+). Requires Mn(2+) as cofactor.

Its subcellular location is the cytoplasm. It catalyses the reaction (R)-malate + NAD(+) = pyruvate + CO2 + NADH. Its function is as follows. Catalyzes the NAD(+)-dependent oxidative decarboxylation of D-malate into pyruvate. Is essential for aerobic growth on D-malate as the sole carbon source. But is not required for anaerobic D-malate utilization, although DmlA is expressed and active in those conditions. Appears to be not able to use L-tartrate as a substrate for dehydrogenation instead of D-malate. The chain is D-malate dehydrogenase [decarboxylating] (dmlA) from Escherichia coli (strain K12).